A 427-amino-acid chain; its full sequence is 3-phosphoshikimate 1-carboxyvinyltransferase (427 aa).

3-phosphoshikimate contacts are provided by Lys-20, Ser-21, and Arg-25. Lys-20 serves as a coordination point for phosphoenolpyruvate. Gly-92 and Arg-120 together coordinate phosphoenolpyruvate. 4 residues coordinate 3-phosphoshikimate: Ser-166, Gln-168, Asp-312, and Lys-339. Phosphoenolpyruvate is bound at residue Gln-168. Asp-312 acts as the Proton acceptor in catalysis. Arg-343 and Arg-385 together coordinate phosphoenolpyruvate.

This sequence belongs to the EPSP synthase family. As to quaternary structure, monomer.

It localises to the cytoplasm. The catalysed reaction is 3-phosphoshikimate + phosphoenolpyruvate = 5-O-(1-carboxyvinyl)-3-phosphoshikimate + phosphate. It participates in metabolic intermediate biosynthesis; chorismate biosynthesis; chorismate from D-erythrose 4-phosphate and phosphoenolpyruvate: step 6/7. In terms of biological role, catalyzes the transfer of the enolpyruvyl moiety of phosphoenolpyruvate (PEP) to the 5-hydroxyl of shikimate-3-phosphate (S3P) to produce enolpyruvyl shikimate-3-phosphate and inorganic phosphate. This Streptococcus pyogenes serotype M4 (strain MGAS10750) protein is 3-phosphoshikimate 1-carboxyvinyltransferase.